The chain runs to 1018 residues: Contactin-1 (1018 aa).

The signal sequence occupies residues 1–20 (MKMWLLVSHLVIISITTCLA). Ig-like C2-type domains follow at residues 41 to 131 (PIFE…ATLS), 137 to 223 (PFPP…KSVF), 241 to 326 (PADI…ARIY), 331 to 407 (PEWV…AELK), 413 to 500 (PTFE…GTLV), and 504 to 601 (PTRI…LVVR). 2 cysteine pairs are disulfide-bonded: Cys-65/Cys-114 and Cys-158/Cys-211. N-linked (GlcNAc...) asparagine glycans are attached at residues Asn-208 and Asn-258. Cys-263 and Cys-310 are joined by a disulfide. Asn-338 is a glycosylation site (N-linked (GlcNAc...) asparagine). 2 disulfide bridges follow: Cys-352–Cys-391 and Cys-436–Cys-484. 2 N-linked (GlcNAc...) asparagine glycosylation sites follow: Asn-457 and Asn-473. N-linked (GlcNAc...) (complex) asparagine glycosylation is present at Asn-494. A glycan (N-linked (GlcNAc...) asparagine) is linked at Asn-521. Cys-526 and Cys-583 are disulfide-bonded. Residue Asn-591 is glycosylated (N-linked (GlcNAc...) asparagine). Fibronectin type-III domains follow at residues 606–704 (PPGG…TDGA), 709–806 (APSD…SAQD), 811–906 (APTE…APPS), and 907–1000 (QPPR…TLSP). The interval 693–717 (SIPSNRIKTDGAAPNVAPSDVGGGG) is disordered. Asn-933 carries an N-linked (GlcNAc...) asparagine glycan. Residue Ser-993 is the site of GPI-anchor amidated serine attachment. A propeptide spans 994 to 1018 (GAPTLSPSLLGLLLPAFGILVYLEF) (removed in mature form).

The protein belongs to the immunoglobulin superfamily. Contactin family. As to quaternary structure, monomer. Interacts with CNTNAP1 in cis form. Binds to the carbonic-anhydrase like domain of PTPRZ1. Interacts with NOTCH1 and TNR. Detected in a complex with NRCAM and PTPRB. Interacts with TASOR. Strongly expressed in brain and in neuroblastoma and retinoblastoma cell lines. Lower levels of expression in lung, pancreas, kidney and skeletal muscle.

The protein localises to the cell membrane. Functionally, contactins mediate cell surface interactions during nervous system development. Involved in the formation of paranodal axo-glial junctions in myelinated peripheral nerves and in the signaling between axons and myelinating glial cells via its association with CNTNAP1. Participates in oligodendrocytes generation by acting as a ligand of NOTCH1. Its association with NOTCH1 promotes NOTCH1 activation through the released notch intracellular domain (NICD) and subsequent translocation to the nucleus. Interaction with TNR induces a repulsion of neurons and an inhibition of neurite outgrowth. The polypeptide is Contactin-1 (CNTN1) (Homo sapiens (Human)).